The following is a 494-amino-acid chain: Lipopolysaccharide core galacturonosyltransferase RgtB (494 aa).

Transmembrane regions (helical) follow at residues 9-29, 74-94, 104-124, 127-147, 156-176, 197-217, 251-271, 291-311, 316-336, and 345-365; these read ISWI…VRLA, LTAL…LYGL, ALVA…FEMQ, LTHT…FIRS, YLIA…FAIL, WRLG…LFWL, LALA…IVFG, MMLV…AAGI, LVPM…AAGV, and FIPV…GSVA.

This sequence belongs to the glycosyltransferase 83 family.

It is found in the cell inner membrane. It participates in bacterial outer membrane biogenesis; LPS core biosynthesis. Its function is as follows. Involved in the modification of the lipopolysaccharide (LPS) inner core. Catalyzes the transfer of a galacturonic acid (GalA) residue to the 5-position of the outer Kdo (3-deoxy-D-manno-octulosonic acid) residue of the LPS inner core, using dodecaprenyl phosphate-GalA as the donor substrate. Acts after the other GalA transferase RgtA. This is Lipopolysaccharide core galacturonosyltransferase RgtB from Rhizobium johnstonii (strain DSM 114642 / LMG 32736 / 3841) (Rhizobium leguminosarum bv. viciae).